Consider the following 500-residue polypeptide: Glycerol kinase (500 aa).

Thr-11 serves as a coordination point for ADP. ATP is bound by residues Thr-11, Thr-12, and Ser-13. Thr-11 contacts sn-glycerol 3-phosphate. Arg-15 lines the ADP pocket. Sn-glycerol 3-phosphate contacts are provided by Arg-81, Glu-82, Tyr-133, and Asp-242. Residues Arg-81, Glu-82, Tyr-133, Asp-242, and Gln-243 each contribute to the glycerol site. Residues Thr-264 and Gly-307 each coordinate ADP. Residues Thr-264, Gly-307, Gln-311, and Gly-411 each contribute to the ATP site. Gly-411 is a binding site for ADP.

This sequence belongs to the FGGY kinase family.

It carries out the reaction glycerol + ATP = sn-glycerol 3-phosphate + ADP + H(+). Its pathway is polyol metabolism; glycerol degradation via glycerol kinase pathway; sn-glycerol 3-phosphate from glycerol: step 1/1. Its activity is regulated as follows. Inhibited by fructose 1,6-bisphosphate (FBP). In terms of biological role, key enzyme in the regulation of glycerol uptake and metabolism. Catalyzes the phosphorylation of glycerol to yield sn-glycerol 3-phosphate. The polypeptide is Glycerol kinase (Bradyrhizobium sp. (strain BTAi1 / ATCC BAA-1182)).